The chain runs to 630 residues: GATA-type transcription factor SRE1 (630 aa).

2 disordered regions span residues 1-139 (MTGL…TPLW) and 162-203 (DRPT…RLTD). Polar residues-rich tracts occupy residues 66 to 82 (DNTQ…QLQN), 115 to 133 (KAQS…NCGT), and 175 to 196 (YGSS…TNDG). The GATA-type 1 zinc-finger motif lies at 128 to 152 (CSNCGTKRTPLWRRSPTGATICNAC). Positions 219–237 (CPGGGSCNGTGGAEGCDGC) are cystein-rich region (CRR). The tract at residues 256 to 283 (HTPRTSPQVSTQGGPGSTEGDAGSSNPE) is disordered. Over residues 258 to 267 (PRTSPQVSTQ) the composition is skewed to polar residues. The GATA-type 2 zinc-finger motif lies at 291-315 (CQNCQTTVTPLWRRDENGHPICNAC). The disordered stretch occupies residues 339–609 (KRVVPAMREQ…AKAERRARLQ (271 aa)). Polar residues predominate over residues 349-363 (SPPSATQSSNGSVSP). Composition is skewed to low complexity over residues 436–447 (NNHNNGETTNTH) and 492–503 (SSSSASFPNNNP). Over residues 504–513 (GRFNSISSLL) the composition is skewed to polar residues. The span at 558–568 (SHSPPRFSPSL) shows a compositional bias: low complexity. Basic and acidic residues predominate over residues 595-609 (VDHRDAKAERRARLQ). A coiled-coil region spans residues 595–630 (VDHRDAKAERRARLQREAQDMREALKAKERELALLE).

Its subcellular location is the nucleus. Functionally, GATA-type transcription repressor that regulates iron- acquisition genes through specific binding the GATA sequence element 5'-(G/A)ATC(T/A)GATAA-3' of target promoters in an iron- and zinc-dependent manner. Regulation occurs via direct binding of iron ions. Iron acquisition regulation is critical for survival under both iron-limiting conditions (to acquire essential iron) and iron-replete conditions (to limit iron toxicity). SRE1 targets include genes encoding a number of key iron-regulated factors such as those involved in siderophore biosynthesis, presumed ferric reductase activity, iron-responsive transcriptional regulation, oxidative stress response, as well as genes encoding a number of putative oxidoreductases, metabolic and mitochondrial enzymes, superoxide dismutase, and genes previously identified as induced during nitrosative stress. The chain is GATA-type transcription factor SRE1 from Ajellomyces capsulatus (Darling's disease fungus).